Consider the following 210-residue polypeptide: Uridine kinase P10 (210 aa).

Residue 10 to 18 (GISGSGKST) participates in ATP binding. Residue D41 is part of the active site.

Belongs to the uridine kinase family. In terms of assembly, interacts with host eIF-2B; this interaction disrupts the interaction between eIF2 and eIF-2B, which leads to the inhibition of stress granules formation.

The protein localises to the host cytoplasm. It localises to the host perinuclear region. The catalysed reaction is uridine + ATP = UMP + ADP + H(+). Functionally, inhibits the integrated stress response (ISR) in the infected cell by preventing the sequestration of eIF2B by phosphorylated EIF2S1/eIF-2alpha. Stress granule formation in response to EIF2S1/eIF-2alpha phosphorylation is thus inhibited, which allows protein synthesis and viral replication. Phosphorylates uridine to uridine monophosphate. This Beluga whale coronavirus (strain SW1) (BwCoV) protein is Uridine kinase P10 (ORF10).